We begin with the raw amino-acid sequence, 360 residues long: Peptide chain release factor 1 (360 aa).

Gln-235 is modified (N5-methylglutamine).

Belongs to the prokaryotic/mitochondrial release factor family. Methylated by PrmC. Methylation increases the termination efficiency of RF1.

Its subcellular location is the cytoplasm. Functionally, peptide chain release factor 1 directs the termination of translation in response to the peptide chain termination codons UAG and UAA. This chain is Peptide chain release factor 1, found in Burkholderia thailandensis (strain ATCC 700388 / DSM 13276 / CCUG 48851 / CIP 106301 / E264).